The following is a 211-amino-acid chain: 3-demethoxyubiquinol 3-hydroxylase (211 aa).

Glu-60, Glu-90, His-93, Glu-142, Glu-174, and His-177 together coordinate Fe cation.

The protein belongs to the COQ7 family. Fe cation serves as cofactor.

It is found in the cell membrane. It carries out the reaction a 5-methoxy-2-methyl-3-(all-trans-polyprenyl)benzene-1,4-diol + AH2 + O2 = a 3-demethylubiquinol + A + H2O. The protein operates within cofactor biosynthesis; ubiquinone biosynthesis. Its function is as follows. Catalyzes the hydroxylation of 2-nonaprenyl-3-methyl-6-methoxy-1,4-benzoquinol during ubiquinone biosynthesis. This Herminiimonas arsenicoxydans protein is 3-demethoxyubiquinol 3-hydroxylase.